Here is a 511-residue protein sequence, read N- to C-terminus: Aldehyde dehydrogenase 2, mitochondrial (511 aa).

The N-terminal 21 residues, 1 to 21 (MSKSKTKTDKRNQSSLSRIKL), are a transit peptide targeting the mitochondrion. Residues 72–92 (VSEKSQHDSTEEDITQVSEKS) are disordered. Residue 274 to 279 (GSTLVG) coordinates NAD(+). E297 (proton acceptor) is an active-site residue. C331 acts as the Nucleophile in catalysis.

This sequence belongs to the aldehyde dehydrogenase family.

The protein localises to the mitochondrion matrix. The catalysed reaction is an aldehyde + NAD(+) + H2O = a carboxylate + NADH + 2 H(+). The protein operates within alcohol metabolism; ethanol degradation; acetate from ethanol: step 2/2. This chain is Aldehyde dehydrogenase 2, mitochondrial (ALD2), found in Saccharomyces cerevisiae (Baker's yeast).